A 64-amino-acid polypeptide reads, in one-letter code: Alpha-conotoxin SI (64 aa).

The first 21 residues, 1-21 (MGMRMMFTVFLLVVLATTVVS), serve as a signal peptide directing secretion. Positions 22–49 (FPSDRASDGRDDEAKDERSDMHESDRKE) are excised as a propeptide. Positions 23-47 (PSDRASDGRDDEAKDERSDMHESDR) are disordered. Positions 26–47 (RASDGRDDEAKDERSDMHESDR) are enriched in basic and acidic residues. Intrachain disulfides connect Cys51-Cys56 and Cys52-Cys62. At Cys62 the chain carries Cysteine amide.

It belongs to the conotoxin A superfamily. Expressed by the venom duct.

Its subcellular location is the secreted. Alpha-conotoxins act on postsynaptic membranes, they bind to the nicotinic acetylcholine receptors (nAChR) and thus inhibit them. Is active on muscle nAChR (IC(50)=113 nM on adult subtype (alpha-1-beta-1-gamma-delta/CHRNA1-CHRNB1-CHRNG-CHRND) and IC(50)=142 nM on fetal subtype (alpha-1-beta-1-delta-epsilon/CHRNA1-CHRNB1-CHRND-CHRNE)). On mice muscle receptors, its higher affinity site is the alpha/delta nAChR subunit interface. On Torpedo receptors, it does not distinguish between alpha/delta and alpha/gamma acetylcholine-binding sites. In vivo, causes paralysis followed by death when injected into goldfish. In contrast, has no effect on mice, when similar doses are intraperitoneally or intracerebrally injected. The protein is Alpha-conotoxin SI of Conus striatus (Striated cone).